Consider the following 108-residue polypeptide: Insulin (108 aa).

The signal sequence occupies residues 1–21; sequence MAVWLQAGALLVLLVVSSVST. 3 disulfide bridges follow: Cys-30/Cys-94, Cys-42/Cys-107, and Cys-93/Cys-98. A propeptide spans 54–84 (c peptide); sequence DVEPLLGFLPPKSAQETEVADFAFKDHAELI.

It belongs to the insulin family. Heterodimer of a B chain and an A chain linked by two disulfide bonds.

The protein localises to the secreted. Functionally, insulin decreases blood glucose concentration. It increases cell permeability to monosaccharides, amino acids and fatty acids. It accelerates glycolysis, the pentose phosphate cycle, and glycogen synthesis in liver. The sequence is that of Insulin (ins) from Danio rerio (Zebrafish).